A 119-amino-acid polypeptide reads, in one-letter code: Large ribosomal subunit protein uL18 (119 aa).

Belongs to the universal ribosomal protein uL18 family. In terms of assembly, part of the 50S ribosomal subunit; part of the 5S rRNA/L5/L18/L25 subcomplex. Contacts the 5S and 23S rRNAs.

Its function is as follows. This is one of the proteins that bind and probably mediate the attachment of the 5S RNA into the large ribosomal subunit, where it forms part of the central protuberance. This Chlorobium luteolum (strain DSM 273 / BCRC 81028 / 2530) (Pelodictyon luteolum) protein is Large ribosomal subunit protein uL18.